A 396-amino-acid polypeptide reads, in one-letter code: Elongation factor Tu (396 aa).

A tr-type G domain is found at 11-205; the sequence is KPHVNIGTIG…TVDEYIPTPE (195 aa). The tract at residues 20–27 is G1; that stretch reads GHVDHGKT. 20-27 is a binding site for GTP; sequence GHVDHGKT. Thr-27 serves as a coordination point for Mg(2+). Positions 61–65 are G2; that stretch reads GITIN. The G3 stretch occupies residues 82–85; the sequence is DAPG. GTP contacts are provided by residues 82-86 and 137-140; these read DAPGH and NKVD. The tract at residues 137–140 is G4; it reads NKVD. The G5 stretch occupies residues 175–177; that stretch reads SAL.

The protein belongs to the TRAFAC class translation factor GTPase superfamily. Classic translation factor GTPase family. EF-Tu/EF-1A subfamily. Monomer.

It localises to the cytoplasm. It carries out the reaction GTP + H2O = GDP + phosphate + H(+). Functionally, GTP hydrolase that promotes the GTP-dependent binding of aminoacyl-tRNA to the A-site of ribosomes during protein biosynthesis. The sequence is that of Elongation factor Tu from Lactobacillus johnsonii (strain CNCM I-12250 / La1 / NCC 533).